Consider the following 991-residue polypeptide: Nonsense-mediated mRNA decay factor SMG8 (991 aa).

Disordered regions lie at residues 16-41 (AWMG…PEPP), 82-127 (HQDP…EGNR), and 279-299 (PPRN…PKRR). A compositionally biased stretch (low complexity) spans 95-110 (EAGAVGEAGGAEDPGA). Phosphoserine is present on serine 115. Residues 279–289 (PPRNQDPAHPD) are compositionally biased toward basic and acidic residues. Over residues 290–299 (KPKKHSPKRR) the composition is skewed to basic residues. Phosphoserine is present on residues serine 469 and serine 668. Residues 653-722 (FEPSTPDPAP…PQAGGDNPEV (70 aa)) are disordered. Over residues 675–684 (DADKLKEKEP) the composition is skewed to basic and acidic residues. Residues 685-706 (QTQGESTSLSLALSLGQSTDSL) are compositionally biased toward polar residues. Serine 742 and serine 895 each carry phosphoserine. Arginine 898 is subject to Omega-N-methylarginine.

Belongs to the SMG8 family. Component of the SMG1C complex composed of SMG1, SMG8 and SMG9; the recruitment of SMG8 to SMG1 N-terminus induces a large conformational change in the SMG1 C-terminal head domain containing the catalytic domain. Forms heterodimers with SMG9; this assembly form may represent a SMG1C intermediate form. Phosphorylated by SMG1.

In terms of biological role, involved in nonsense-mediated decay (NMD) of mRNAs containing premature stop codons. Is recruited by release factors to stalled ribosomes together with SMG1 and SMG9 (forming the SMG1C protein kinase complex) and, in the SMG1C complex, is required to mediate the recruitment of SMG1 to the ribosome:SURF complex and to suppress SMG1 kinase activity until the ribosome:SURF complex locates the exon junction complex (EJC). Acts as a regulator of kinase activity. This chain is Nonsense-mediated mRNA decay factor SMG8 (SMG8), found in Homo sapiens (Human).